A 102-amino-acid chain; its full sequence is Small ribosomal subunit protein uS10 (102 aa).

Belongs to the universal ribosomal protein uS10 family. As to quaternary structure, part of the 30S ribosomal subunit.

Functionally, involved in the binding of tRNA to the ribosomes. This chain is Small ribosomal subunit protein uS10, found in Bifidobacterium longum subsp. infantis (strain ATCC 15697 / DSM 20088 / JCM 1222 / NCTC 11817 / S12).